A 308-amino-acid chain; its full sequence is Phenylcoumaran benzylic ether reductase TP7 (308 aa).

Residues 11–17, Arg-36, and Lys-45 each bind NADP(+); that span reads GGTGYIG. The active-site Proton acceptor is Lys-133. An NADP(+)-binding site is contributed by Arg-137.

Belongs to the NmrA-type oxidoreductase family. Isoflavone reductase subfamily. Expressed in flowers. Expressed at low levels in stems.

It carries out the reaction (-)-dehydrodiconiferyl alcohol + NADPH + H(+) = (S)-isodihydrodehydrodiconiferyl alcohol + NADP(+). The catalysed reaction is (+)-dehydrodiconiferyl alcohol + NADPH + H(+) = (R)-isodihydrodehydrodiconiferyl alcohol + NADP(+). It catalyses the reaction (2R,3S)-dihydrodehydrodiconiferyl alcohol + NADPH + H(+) = (S)-tetrahydrodehydrodiconiferyl alcohol + NADP(+). The enzyme catalyses (2S,3R)-dihydrodehydrodiconiferyl alcohol + NADPH + H(+) = (R)-tetrahydrodehydrodiconiferyl alcohol + NADP(+). Functionally, oxidoreductase involved in lignan biosynthesis. Catalyzes the NADPH-dependent reduction of phenylcoumaran benzylic ethers. Converts dehydrodiconiferyl alcohol (DDC) to isodihydrodehydrodiconiferyl alcohol (IDDDC), and dihydrodehydrodiconiferyl alcohol (DDDC) to tetrahydrodehydrodiconiferyl alcohol (TDDC). This Nicotiana tabacum (Common tobacco) protein is Phenylcoumaran benzylic ether reductase TP7.